We begin with the raw amino-acid sequence, 529 residues long: Peptide chain release factor 3 (529 aa).

A tr-type G domain is found at 10-279 (EQRRCFGIIS…ALVEMAPAPG (270 aa)). GTP contacts are provided by residues 19–26 (SHPDAGKT), 87–91 (DTPGH), and 141–144 (NKMD).

Belongs to the TRAFAC class translation factor GTPase superfamily. Classic translation factor GTPase family. PrfC subfamily.

Its subcellular location is the cytoplasm. In terms of biological role, increases the formation of ribosomal termination complexes and stimulates activities of RF-1 and RF-2. It binds guanine nucleotides and has strong preference for UGA stop codons. It may interact directly with the ribosome. The stimulation of RF-1 and RF-2 is significantly reduced by GTP and GDP, but not by GMP. The polypeptide is Peptide chain release factor 3 (Desulfatibacillum aliphaticivorans).